A 339-amino-acid chain; its full sequence is Protein H339R (339 aa).

Belongs to the asfivirus H339R family. Interacts with host NACA (alpha chain of nascent polypeptide-associated complex).

It is found in the host cytoplasm. The protein localises to the host nucleus. This is Protein H339R from African swine fever virus (isolate Tick/South Africa/Pretoriuskop Pr4/1996) (ASFV).